A 132-amino-acid polypeptide reads, in one-letter code: Large ribosomal subunit protein bL19 (132 aa).

Belongs to the bacterial ribosomal protein bL19 family.

This protein is located at the 30S-50S ribosomal subunit interface and may play a role in the structure and function of the aminoacyl-tRNA binding site. This is Large ribosomal subunit protein bL19 from Nitrosomonas europaea (strain ATCC 19718 / CIP 103999 / KCTC 2705 / NBRC 14298).